The primary structure comprises 203 residues: Ras-related protein Rab-13 (203 aa).

Positions 17, 18, 20, 21, 22, 23, and 40 each coordinate GTP. Thr-22 is a binding site for Mg(2+). Residues 31 to 45 (DNFNSTYISTIGIDF) carry the Switch 1 motif. Residue Thr-40 participates in Mg(2+) binding. Glycyl lysine isopeptide (Lys-Gly) (interchain with G-Cter in ubiquitin) cross-links involve residues Lys-46 and Lys-58. Asp-63 contacts Mg(2+). The Switch 2 signature appears at 63 to 80 (DTAGQERFKTITTAYYRG). Positions 66, 121, 122, 124, 152, and 153 each coordinate GTP. The interval 173–203 (TGGRRSGNSSKPSSTDLKVSDKKNSNKCSLG) is disordered. Ser-178 carries the phosphoserine modification. Positions 178-189 (SGNSSKPSSTDL) are enriched in polar residues. Cys-200 is modified (cysteine methyl ester). Cys-200 carries the S-geranylgeranyl cysteine lipid modification. Residues 201 to 203 (SLG) constitute a propeptide, removed in mature form.

It belongs to the small GTPase superfamily. Rab family. Interacts (GTP-bound form) with MICALL2; competes with RAB8A and is involved in tight junctions assembly. Interacts (GTP-bound form) with MICALL1. Interacts (GTP-bound form) with MICAL1, MICAL3, MICALCL, EHBP1 and EHBP1L1; ternary complexes of RAB8A, RAB13 and either MICAL1 or EHBP1L1 are possible. Interacts with PRKACA; downstream effector of RAB13 involved in tight junction assembly. Interacts with GRB2; may recruit RAB13 to the leading edge of migrating endothelial cells where it can activate RHOA. Interacts (isoprenylated form) with PDE6D; dissociates RAB13 from membranes. Interacts with BICDL2/BICDR2. Interacts with LEPROT and LEPROTL1. Mg(2+) serves as cofactor. In terms of processing, ubiquitinated via 'Lys-11'-linked ubiquitination on Lys-46 and Lys-58; impairing the recruitment of guanosine diphosphate (GDP) dissociation inhibitor 1/GDI1. In terms of tissue distribution, highest levels found in lung, kidney, whole brain and spinal cord. Expressed in all tissues tested including Sertoli and germ cells (at protein level). Also detected in osteoclasts.

It is found in the cell membrane. The protein resides in the cytoplasmic vesicle membrane. The protein localises to the cell junction. It localises to the tight junction. Its subcellular location is the golgi apparatus. It is found in the trans-Golgi network membrane. The protein resides in the recycling endosome membrane. The protein localises to the cell projection. It localises to the lamellipodium. It catalyses the reaction GTP + H2O = GDP + phosphate + H(+). With respect to regulation, regulated by guanine nucleotide exchange factors (GEFs) including DENND1C, which promote the exchange of bound GDP for free GTP. Regulated by GTPase activating proteins (GAPs) which increase the GTP hydrolysis activity. Inhibited by GDP dissociation inhibitors (GDIs). Activated in response to insulin. Its function is as follows. The small GTPases Rab are key regulators of intracellular membrane trafficking, from the formation of transport vesicles to their fusion with membranes. Rabs cycle between an inactive GDP-bound form and an active GTP-bound form that is able to recruit to membranes different sets of downstream effectors directly responsible for vesicle formation, movement, tethering and fusion. RAB13 is involved in endocytic recycling and regulates the transport to the plasma membrane of transmembrane proteins like the tight junction protein OCLN/occludin. Thereby, it regulates the assembly and the activity of tight junctions. Moreover, it may also regulate tight junction assembly by activating the PKA signaling pathway and by reorganizing the actin cytoskeleton through the activation of the downstream effectors PRKACA and MICALL2 respectively. Through its role in tight junction assembly, may play a role in the establishment of Sertoli cell barrier. Plays also a role in angiogenesis through regulation of endothelial cells chemotaxis. Also involved in neurite outgrowth. Has also been proposed to play a role in post-Golgi membrane trafficking from the TGN to the recycling endosome. Finally, it has been involved in insulin-induced transport to the plasma membrane of the glucose transporter GLUT4 and therefore may play a role in glucose homeostasis. This chain is Ras-related protein Rab-13, found in Rattus norvegicus (Rat).